A 354-amino-acid chain; its full sequence is Ubiquinol oxidase 1a, mitochondrial (354 aa).

The transit peptide at 1–62 (MMITRGGAKA…RAPTIGGMRF (62 aa)) directs the protein to the mitochondrion. The interval 68–99 (LGEKTPMKEEDANQKKTENESTGGDAAGGNNK) is disordered. The span at 72–86 (TPMKEEDANQKKTEN) shows a compositional bias: basic and acidic residues. The chain crosses the membrane as a helical span at residues 179–199 (AMMLETVAAVPGMVGGMLLHC). Fe cation-binding residues include glutamate 183, glutamate 222, and histidine 225. The chain crosses the membrane as a helical span at residues 241–261 (ALVITVQGVFFNAYFLGYLIS). Residues glutamate 273, glutamate 324, and histidine 327 each coordinate Fe cation.

It belongs to the alternative oxidase family. In terms of assembly, homodimer; disulfide-linked. It depends on Fe cation as a cofactor. In terms of tissue distribution, expressed in roots, stems, cotyledons, leaves and flowers. High expression in sepals.

Its subcellular location is the mitochondrion inner membrane. The enzyme catalyses 2 a ubiquinol + O2 = 2 a ubiquinone + 2 H2O. When the two monomeric subunits are covalently linked by a S-S bond, the enzyme is essentially inactive. When the disulfide bond is reduced, its component sulfhydryls can associate with K-keto acids through formation of a thiohemiacetal, resulting in enzyme activation. Activated by glyoxylate, irrespective to the substitution found at Cys-127. That suggests the presence of a second activation site, possibly Cys-177. Its function is as follows. Catalyzes the cyanide-resistant oxidation of ubiquinol and the reduction of molecular oxygen to water, but does not translocate protons and consequently is not linked to oxidative phosphorylation. Increases respiration when the cytochrome respiratory pathway is restricted, or in response to low temperatures. The polypeptide is Ubiquinol oxidase 1a, mitochondrial (AOX1A) (Arabidopsis thaliana (Mouse-ear cress)).